Here is a 216-residue protein sequence, read N- to C-terminus: CsgBAC operon transcriptional regulatory protein (216 aa).

The HTH luxR-type domain maps to 149 to 214; sequence NSTESALLTH…QAVSWANDNL (66 aa). The H-T-H motif DNA-binding region spans 173 to 192; it reads NNEIARSLFISENTVKTHLY.

The protein resides in the cell inner membrane. In terms of biological role, the master regulator for adhesive curli fimbriae expression; necessary for transcription of the csgBAC/ymdA operon. Plays a positive role in biofilm formation. May have the capability to respond to starvation and/or high cell density by activating csgBA transcription. Low-level constitutive expression confers an adherent curli fimbriae-expressing phenotype, up-regulates 10 genes and down-regulates 14 others. This chain is CsgBAC operon transcriptional regulatory protein (csgD), found in Escherichia coli (strain K12).